Here is a 226-residue protein sequence, read N- to C-terminus: UPF0758 protein Daci_1904 (226 aa).

Positions 104–226 (ALASPEAVAR…SLSMAGQGML (123 aa)) constitute an MPN domain. Residues histidine 175, histidine 177, and aspartate 188 each coordinate Zn(2+). The short motif at 175–188 (HNHPSGQVQASAAD) is the JAMM motif element.

This sequence belongs to the UPF0758 family.

The chain is UPF0758 protein Daci_1904 from Delftia acidovorans (strain DSM 14801 / SPH-1).